Consider the following 294-residue polypeptide: GDP-6-deoxy-D-talose 4-dehydrogenase (294 aa).

NAD(+)-binding positions include 11 to 12, 38 to 39, 60 to 64, Thr-104, Tyr-128, Lys-132, and Phe-154; these read FI, DL, and LAALT. Residues Thr-104 and Tyr-128 each contribute to the substrate site. Tyr-128 functions as the Proton acceptor in the catalytic mechanism. Substrate contacts are provided by Asn-155 and Arg-190.

This sequence belongs to the NAD(P)-dependent epimerase/dehydratase family.

It catalyses the reaction GDP-6-deoxy-alpha-D-talose + NAD(+) = GDP-4-dehydro-alpha-D-rhamnose + NADH + H(+). The catalysed reaction is GDP-6-deoxy-alpha-D-talose + NADP(+) = GDP-4-dehydro-alpha-D-rhamnose + NADPH + H(+). Its pathway is bacterial outer membrane biogenesis; LPS O-antigen biosynthesis. Its function is as follows. Catalyzes the conversion of GDP-4-dehydro-6-deoxy-D-mannose to GDP-6-deoxy-D-talose. The protein is GDP-6-deoxy-D-talose 4-dehydrogenase (tld) of Aggregatibacter actinomycetemcomitans (Actinobacillus actinomycetemcomitans).